The sequence spans 133 residues: Small ribosomal subunit protein uS11 (133 aa).

This sequence belongs to the universal ribosomal protein uS11 family. As to quaternary structure, part of the 30S ribosomal subunit. Interacts with proteins S7 and S18. Binds to IF-3.

In terms of biological role, located on the platform of the 30S subunit, it bridges several disparate RNA helices of the 16S rRNA. Forms part of the Shine-Dalgarno cleft in the 70S ribosome. The protein is Small ribosomal subunit protein uS11 of Methylibium petroleiphilum (strain ATCC BAA-1232 / LMG 22953 / PM1).